A 354-amino-acid polypeptide reads, in one-letter code: Tsukushi (354 aa).

An N-terminal signal peptide occupies residues 1-17 (MLCSLFLLLLAVGRVQT). The LRRNT domain occupies 18-59 (TRPCFPGCQCEEETFGLFDSFSLIRVDCSSLGPHIVPVPIPL). LRR repeat units lie at residues 60–81 (DTAH…VLAG), 86–107 (TLAG…AFSR), 110–131 (YLES…IFTS), 133–154 (PLSD…AFTT), 160–180 (ALHV…PARA), 186–207 (TIQS…RDLP), 208–228 (LRYL…AFMG), 231–253 (GLTH…GFRE), 256–277 (GLQV…EVFS), and 281–302 (LLQE…LLHH). Asparagine 75 carries an N-linked (GlcNAc...) asparagine glycan. Asparagine 138 carries an N-linked (GlcNAc...) asparagine glycan. The N-linked (GlcNAc...) asparagine glycan is linked to asparagine 191.

In terms of assembly, interacts with FZD4 (via FZ domain); competes with WNT2B for binding to FZD4, inhibiting Wnt signaling and repressing peripheral eye development. Interacts with TGFB1; the interaction contributes to regulation of the hair cycle. Interacts with netrin. Interacts with CCN2. As to expression, expressed in macrophages in inflamed wounds with wound expression starting 2 days post-wounding (dpw) (at protein level). At 7 dpw, expressed from epidermis and extracellular matrix in the wound edge to neoepidermis and granulation tissue and in panniculus carnosus under the granulation tissue (at protein level). After fibrosis, disappears in the dermal area at 11 dpw (at protein level). Expressed in the hair follicle during morphogenesis and the hair cycle (at protein level). In embryonic brain, strong expression in the olfactory bulb, anterior olfactory nucleus, neocortex, piriform cortex, glial wedge, midline zipper glia, indusium griseum and the area surrounding the anterior commissure (AC) but not on AC axons (at protein level). In the adult eye, expressed in retinal layers, lens epithelium, and ciliary body where it is expressed predominantly in the inner non-pigmented layer. Expressed in almost all brain regions in the embryo, in the cortex and the lateral ventricle at P0 and is restricted to the subventricular zone and lateral nucleus of the amygdala in adults. Prominent expression in hippocampal regions from early postnatal stages until postnatal day 15 and gradually declines at later stages. Expressed in almost all bone regions in the femurs of juveniles. In the inner ear, accumulates in nonprosensory regions during early embryonic stages and in both nonprosensory and prosensory regions in late embryonic stages. In the adult ear, expressed in the organ of Corti, spiral ganglion cells, and the stria vascularis. Highly expressed in the liver where it is detected primarily in hepatocytes but not in non-parenchymal cells.

It localises to the secreted. Its function is as follows. Contributes to various developmental events and other processes such as wound healing and cholesterol homeostasis through its interactions with multiple signaling pathways. Wnt signaling inhibitor which competes with WNT2B for binding to Wnt receptor FZD4 and represses WNT2B-dependent development of the peripheral eye. Plays a role in regulating the hair cycle by controlling TGFB1 signaling. Required for the development of the anterior commissure in the brain by inhibiting neurite outgrowth. Essential for terminal differentiation of hippocampal neural stem cells. Plays a role in regulating bone elongation and bone mass by modulating growth plate chondrocyte function and overall body size. Required for development of the inner ear through its involvement in stereocilia formation in inner hair cells. Facilitates wound healing by inhibiting secretion of TGFB1 from macrophages which prevents myofibroblast differentiation, maintaining inflammatory cell quiescence. Plays a role in cholesterol homeostasis by reducing circulating high-density lipoprotein cholesterol, lowering cholesterol efflux capacity and decreasing cholesterol-to-bile acid conversion in the liver. In one study, shown to negatively regulate sympathetic innervation in brown fat, leading to reduced energy expenditure. In another study, shown not to affect brown fat thermogenic capacity, body weight gain or glucose homeostasis. The polypeptide is Tsukushi (Mus musculus (Mouse)).